A 965-amino-acid chain; its full sequence is Phosphoenolpyruvate carboxylase 1 (965 aa).

A Phosphoserine modification is found at serine 11. Histidine 172 is an active-site residue. D-glucose 6-phosphate is bound by residues tryptophan 283, arginine 450, and aspartate 597. Residue lysine 600 is part of the active site. Arginine 635 serves as a coordination point for D-glucose 6-phosphate. Arginine 641 is an active-site residue. Residue arginine 641 participates in L-aspartate binding. Residue threonine 665 participates in D-glucose 6-phosphate binding. Glutamine 673 lines the L-aspartate pocket. D-glucose 6-phosphate contacts are provided by residues arginine 753 and 767–769 (RAI). 3 residues coordinate L-aspartate: lysine 829, arginine 888, and asparagine 963.

The protein belongs to the PEPCase type 1 family. In terms of assembly, homotetramer. It depends on Mg(2+) as a cofactor. As to expression, expressed in roots and stems and at low levels in leaves. Preferentially expressed in the phloem and in root tips.

It is found in the cytoplasm. It carries out the reaction oxaloacetate + phosphate = phosphoenolpyruvate + hydrogencarbonate. Its activity is regulated as follows. Activated by the allosteric regulator glucose-6-phosphate. Inhibited by malate and aspartate. Up regulated by light-reversible phosphorylation. In terms of biological role, through the carboxylation of phosphoenolpyruvate (PEP) it forms oxaloacetate, a four-carbon dicarboxylic acid source for the tricarboxylic acid cycle. May be involved in phloem loading with sucrose and in anions and cations uptake and amino acid biosynthesis in roots. This chain is Phosphoenolpyruvate carboxylase 1, found in Flaveria trinervia (Clustered yellowtops).